Reading from the N-terminus, the 267-residue chain is Hydroxyethylthiazole kinase (267 aa).

Residue Met-46 coordinates substrate. The ATP site is built by Arg-122 and Thr-168. Position 195 (Gly-195) interacts with substrate.

The protein belongs to the Thz kinase family. Mg(2+) serves as cofactor.

It carries out the reaction 5-(2-hydroxyethyl)-4-methylthiazole + ATP = 4-methyl-5-(2-phosphooxyethyl)-thiazole + ADP + H(+). The protein operates within cofactor biosynthesis; thiamine diphosphate biosynthesis; 4-methyl-5-(2-phosphoethyl)-thiazole from 5-(2-hydroxyethyl)-4-methylthiazole: step 1/1. In terms of biological role, catalyzes the phosphorylation of the hydroxyl group of 4-methyl-5-beta-hydroxyethylthiazole (THZ). This chain is Hydroxyethylthiazole kinase, found in Moorella thermoacetica (strain ATCC 39073 / JCM 9320).